We begin with the raw amino-acid sequence, 306 residues long: Non-homologous end joining protein Ku 2 (306 aa).

A Ku domain is found at 21 to 206 (ISFGLVNIGV…EVSKQEIDMA (186 aa)). The interval 233–306 (LIDAKTKGTK…GSRDKTRKRA (74 aa)) is disordered. Basic residues predominate over residues 274–290 (RTSRRKTTASASRRRSS). Basic and acidic residues predominate over residues 291-300 (SNREKTGSRD).

The protein belongs to the prokaryotic Ku family. In terms of assembly, homodimer. Interacts with LigD.

Its function is as follows. With LigD forms a non-homologous end joining (NHEJ) DNA repair enzyme, which repairs dsDNA breaks with reduced fidelity. Binds linear dsDNA with 5'- and 3'- overhangs but not closed circular dsDNA nor ssDNA. Recruits and stimulates the ligase activity of LigD. In Saccharopolyspora erythraea (strain ATCC 11635 / DSM 40517 / JCM 4748 / NBRC 13426 / NCIMB 8594 / NRRL 2338), this protein is Non-homologous end joining protein Ku 2.